Reading from the N-terminus, the 395-residue chain is Phosphoglycerate kinase (395 aa).

Substrate contacts are provided by residues 21-23, Arg36, 59-62, Arg114, and Arg147; these read DLN and HLGR. ATP-binding positions include Lys198, Glu320, and 346-349; that span reads GGDT.

It belongs to the phosphoglycerate kinase family. In terms of assembly, monomer.

It localises to the cytoplasm. It carries out the reaction (2R)-3-phosphoglycerate + ATP = (2R)-3-phospho-glyceroyl phosphate + ADP. It functions in the pathway carbohydrate degradation; glycolysis; pyruvate from D-glyceraldehyde 3-phosphate: step 2/5. In Nitrosospira multiformis (strain ATCC 25196 / NCIMB 11849 / C 71), this protein is Phosphoglycerate kinase.